The primary structure comprises 213 residues: Nicotinamidase (213 aa).

The active-site Proton acceptor is the Asp10. Zn(2+)-binding residues include Asp52, His54, and His86. Lys111 is a catalytic residue. Cys156 serves as the catalytic Nucleophile.

This sequence belongs to the isochorismatase family.

It catalyses the reaction nicotinamide + H2O = nicotinate + NH4(+). The enzyme catalyses pyrazinamide + H2O = pyrazine-2-carboxylate + NH4(+). It functions in the pathway cofactor biosynthesis; nicotinate biosynthesis; nicotinate from nicotinamide: step 1/1. Its function is as follows. Catalyzes the deamidation of nicotinamide (NAM) into nicotinate. Likely functions in the cyclical salvage pathway for production of NAD from nicotinamide. Is also able to hydrolyze the first-line antituberculous drug pyrazinamide (PZA) into pyrazinoic acid in vitro, but this reaction is not considered to be physiologically relevant. The polypeptide is Nicotinamidase (Escherichia coli (strain K12)).